The following is a 162-amino-acid chain: Methyl-coenzyme M reductase II operon protein D (162 aa).

In terms of assembly, MCR is composed of three subunits: alpha, beta, and gamma. The function of protein D is not known.

This Methanothermobacter thermautotrophicus (strain ATCC 29096 / DSM 1053 / JCM 10044 / NBRC 100330 / Delta H) (Methanobacterium thermoautotrophicum) protein is Methyl-coenzyme M reductase II operon protein D (mrtD).